We begin with the raw amino-acid sequence, 422 residues long: MRISILQLVPVVGYIGFALGELYKPKNSISCSPNNPCPAEWPCCSPYNECGAGPICVGGCNVRSSFDEESCAPIPALVASQKLEFVSTPKVPKFIVNYQPKPPIREGNGPNKANTKVGVVEGELNSKRIIHYAKFLVTPDSKEAEKMLEDFDFTHSGYTSIEASSGNIVLAMPKKTTGSLITSTRSFLYGKASVRMKTARSRGVVTAFDLTSAIGDEIDFEWLGGDLMTAQSNYYSQGHLDYTRMQRFPVGADTWATYHTYEIDWDPDRIIWYVDGKIARTVLKKDTWDPISKEYRYPQTPMRLEIAVWPGGSETNGPGTINWAGGLIDWENSPDIIEKGQFTAHVEQITVTPYQNKFTEQVQFCIKAKKKAPTFSQKDLSRVVVSYNRQDRLNHHDEGSLKWDCFVTPKINDWLSSWKRSK.

A signal peptide spans 1-20 (MRISILQLVPVVGYIGFALG). A GH16 domain is found at 67 to 339 (DEESCAPIPA…WENSPDIIEK (273 aa)). Glu-217 serves as the catalytic Nucleophile. The active-site Proton donor is Glu-221.

This sequence belongs to the glycosyl hydrolase 16 family. CRR1 subfamily.

It is found in the spore wall. Its function is as follows. Spore specific glycosidase involved in spore wall assembly during sporulation. May be involved in copper import. The protein is Probable glycosidase CRR1 (CRR1) of Saccharomyces cerevisiae (strain ATCC 204508 / S288c) (Baker's yeast).